The sequence spans 172 residues: Adenine phosphoribosyltransferase (172 aa).

It belongs to the purine/pyrimidine phosphoribosyltransferase family. Homodimer.

The protein resides in the cytoplasm. The catalysed reaction is AMP + diphosphate = 5-phospho-alpha-D-ribose 1-diphosphate + adenine. The protein operates within purine metabolism; AMP biosynthesis via salvage pathway; AMP from adenine: step 1/1. Its function is as follows. Catalyzes a salvage reaction resulting in the formation of AMP, that is energically less costly than de novo synthesis. The polypeptide is Adenine phosphoribosyltransferase (Staphylococcus aureus (strain bovine RF122 / ET3-1)).